We begin with the raw amino-acid sequence, 693 residues long: UvrABC system protein B (693 aa).

Residues 35 to 188 (ERINNGEKDV…DQLLRQFVGI (154 aa)) enclose the Helicase ATP-binding domain. Residue 48 to 55 (GATGTGKS) coordinates ATP. The Beta-hairpin motif lies at 101-124 (YYDYYQPEAYVPQTDTFIEKDSSV). The Helicase C-terminal domain occupies 438–600 (QIDDLLGEIR…VDPTPLRKRI (163 aa)). Residues 612 to 634 (ADTKSLLESAGKGRSRGKAPVPV) form a disordered region. Positions 648 to 683 (VDLIEQLTAQMHSAAGELQFELAARLRDEVGDLKKE) constitute a UVR domain.

The protein belongs to the UvrB family. In terms of assembly, forms a heterotetramer with UvrA during the search for lesions. Interacts with UvrC in an incision complex.

The protein localises to the cytoplasm. The UvrABC repair system catalyzes the recognition and processing of DNA lesions. A damage recognition complex composed of 2 UvrA and 2 UvrB subunits scans DNA for abnormalities. Upon binding of the UvrA(2)B(2) complex to a putative damaged site, the DNA wraps around one UvrB monomer. DNA wrap is dependent on ATP binding by UvrB and probably causes local melting of the DNA helix, facilitating insertion of UvrB beta-hairpin between the DNA strands. Then UvrB probes one DNA strand for the presence of a lesion. If a lesion is found the UvrA subunits dissociate and the UvrB-DNA preincision complex is formed. This complex is subsequently bound by UvrC and the second UvrB is released. If no lesion is found, the DNA wraps around the other UvrB subunit that will check the other stand for damage. This is UvrABC system protein B from Renibacterium salmoninarum (strain ATCC 33209 / DSM 20767 / JCM 11484 / NBRC 15589 / NCIMB 2235).